Consider the following 886-residue polypeptide: Phosphatidylinositol 3-kinase catalytic subunit type 3 (886 aa).

A C2 PI3K-type domain is found at Y35–Q184. One can recognise a PIK helical domain in the interval D283–V519. A disordered region spans residues G414–G464. Residues S429–I444 are compositionally biased toward polar residues. Over residues L445–S454 the composition is skewed to low complexity. The 267-residue stretch at I604–F870 folds into the PI3K/PI4K catalytic domain. Residues L610–M616 are G-loop. Residues G739–N747 form a catalytic loop region. The interval H758–N779 is activation loop.

Belongs to the PI3/PI4-kinase family. As to quaternary structure, component of the PI3K (PI3KC3/PI3K-III/class III phosphatidylinositol 3-kinase) complex the core of which is composed of the catalytic subunit pik3c3, the regulatory subunit pik3r4 and becn1 associating with additional regulatory/auxiliary subunits to form alternative complex forms. It depends on Mn(2+) as a cofactor.

Its subcellular location is the midbody. It carries out the reaction a 1,2-diacyl-sn-glycero-3-phospho-(1D-myo-inositol) + ATP = a 1,2-diacyl-sn-glycero-3-phospho-(1D-myo-inositol-3-phosphate) + ADP + H(+). Functionally, catalytic subunit of the PI3K complex that mediates formation of phosphatidylinositol 3-phosphate; different complex forms are believed to play a role in multiple membrane trafficking pathways. Involved in the transport of lysosomal enzyme precursors to lysosomes. Required for transport from early to late endosomes. This chain is Phosphatidylinositol 3-kinase catalytic subunit type 3 (pik3c3), found in Xenopus laevis (African clawed frog).